The chain runs to 471 residues: Intraflagellar transport protein 46 homolog (471 aa).

Disordered regions lie at residues 1 to 202 and 226 to 246; these read MSSE…SNMR and SRLE…EDDD. Acidic residues-rich tracts occupy residues 89 to 99 and 231 to 246; these read SEPQEVIDVND and DSSN…EDDD.

Belongs to the IFT46 family. In terms of assembly, component of the IFT complex B composed of at least che-2, che-13, dyf-1, dyf-3, dyf-6, dyf-11, dyf-13, ift-20, ift-74, ift-81, ifta-2, osm-1, osm-5 and osm-6. Expressed in the hypodermis and sensory neurons including inner labial, PDE, amphid and phasmid neurons.

Its subcellular location is the cell projection. The protein resides in the cilium. The protein localises to the cytoplasm. It localises to the cytoskeleton. It is found in the cilium basal body. Its subcellular location is the dendrite. The protein resides in the perikaryon. Component of the intraflagellar transport (IFT) complex B required for transport of proteins in the motile cilium. May be required for ciliary entrance and transport of specific ciliary cargo proteins such as che-3 which are related to motility. Required for normal morphology and function of ciliated amphid sensory neurons. The polypeptide is Intraflagellar transport protein 46 homolog (Caenorhabditis elegans).